The primary structure comprises 500 residues: Allene oxide synthase 3 (500 aa).

A disordered region spans residues 1–26 (MAPPPVNSGDAAAAATGEKSKLSPSG). Substrate is bound by residues 297–298 (FN), K304, and 365–368 (PVEF). C452 serves as a coordination point for heme.

The protein belongs to the cytochrome P450 family. Heme is required as a cofactor. In terms of tissue distribution, not expressed in dark-grown seedlings.

It catalyses the reaction (13S)-hydroperoxy-(9Z,11E,15Z)-octadecatrienoate = (9Z,13S,15Z)-12,13-epoxyoctadeca-9,11,15-trienoate + H2O. The protein operates within lipid metabolism; oxylipin biosynthesis. Functionally, involved in the biosynthesis of jasmonic acid, a growth regulator that is implicated also as a signaling molecule in plant defense. Converts 13-hydroperoxylinolenic acid to 12,13-epoxylinolenic acid. The chain is Allene oxide synthase 3 (CYP74A3) from Oryza sativa subsp. japonica (Rice).